The sequence spans 927 residues: DNA mismatch repair protein MutS (927 aa).

An ATP-binding site is contributed by 646 to 653 (GPNMAGKS). A disordered region spans residues 904–927 (SAQPGSAEQGESPDKHDEGKNSRG). Positions 915-927 (SPDKHDEGKNSRG) are enriched in basic and acidic residues.

The protein belongs to the DNA mismatch repair MutS family.

This protein is involved in the repair of mismatches in DNA. It is possible that it carries out the mismatch recognition step. This protein has a weak ATPase activity. The protein is DNA mismatch repair protein MutS of Desulfovibrio desulfuricans (strain ATCC 27774 / DSM 6949 / MB).